Consider the following 317-residue polypeptide: MNNWNSITIKISREAGEAISALLIEAGSAGVEINDSADYLNHEDQFGEVLPEIEQSDFVEITAYYPENMPIVELKAEIEHKIANLSDYFSLTGLSVTTNNLSETNWAEAWKKYFEPARITHDLTIVPSWTEDYVATGSEKLIRLDPGMAFGTGTHPTTKMSLYALEQVLRGGETLLDVGTGSGVLSVAASYLGAAEIFAYDIDEVAVRVALENIELNPGHEKIHVSANNLLEGIDKKADVIVANILADILVLMTEDAFRLVKEEGYLIMSGIIADKADMVIASAEKAGFFLETRMIQGEWNCLIFKKTENREGVIGG.

S-adenosyl-L-methionine contacts are provided by T158, G179, D201, and N244.

Belongs to the methyltransferase superfamily. PrmA family.

Its subcellular location is the cytoplasm. It catalyses the reaction L-lysyl-[protein] + 3 S-adenosyl-L-methionine = N(6),N(6),N(6)-trimethyl-L-lysyl-[protein] + 3 S-adenosyl-L-homocysteine + 3 H(+). Functionally, methylates ribosomal protein L11. In Lactococcus lactis subsp. lactis (strain IL1403) (Streptococcus lactis), this protein is Ribosomal protein L11 methyltransferase.